A 496-amino-acid chain; its full sequence is NADH-quinone oxidoreductase subunit N (496 aa).

The next 14 helical transmembrane spans lie at L12–I32, S43–L63, V79–L99, S108–A128, L132–L152, F166–L186, G207–L227, V257–W277, V280–Q300, M306–T326, I333–M353, A383–W403, G416–L436, and A464–V484.

Belongs to the complex I subunit 2 family. As to quaternary structure, NDH-1 is composed of 14 different subunits. Subunits NuoA, H, J, K, L, M, N constitute the membrane sector of the complex.

The protein resides in the cell inner membrane. It carries out the reaction a quinone + NADH + 5 H(+)(in) = a quinol + NAD(+) + 4 H(+)(out). In terms of biological role, NDH-1 shuttles electrons from NADH, via FMN and iron-sulfur (Fe-S) centers, to quinones in the respiratory chain. The immediate electron acceptor for the enzyme in this species is believed to be ubiquinone. Couples the redox reaction to proton translocation (for every two electrons transferred, four hydrogen ions are translocated across the cytoplasmic membrane), and thus conserves the redox energy in a proton gradient. This chain is NADH-quinone oxidoreductase subunit N, found in Sulfurovum sp. (strain NBC37-1).